A 106-amino-acid chain; its full sequence is UPF0145 protein FTL_1249 (106 aa).

Belongs to the UPF0145 family.

This Francisella tularensis subsp. holarctica (strain LVS) protein is UPF0145 protein FTL_1249.